A 218-amino-acid polypeptide reads, in one-letter code: Small ribosomal subunit protein uS5 (218 aa).

Residues 66-129 (LKQELLNVNL…REAKLNLVPV (64 aa)) enclose the S5 DRBM domain.

The protein belongs to the universal ribosomal protein uS5 family. Part of the 30S ribosomal subunit. Contacts protein S4.

Functionally, with S4 and S12 plays an important role in translational accuracy. The polypeptide is Small ribosomal subunit protein uS5 (Pyrobaculum aerophilum (strain ATCC 51768 / DSM 7523 / JCM 9630 / CIP 104966 / NBRC 100827 / IM2)).